A 273-amino-acid polypeptide reads, in one-letter code: Large ribosomal subunit protein uL2 (273 aa).

Positions 228-273 (VDHPHGGGEGKTSGGRHPVTPWGFPTKGKKTRKNKRTSKFIVKKRK) are disordered. A compositionally biased stretch (basic residues) spans 254 to 273 (KGKKTRKNKRTSKFIVKKRK).

It belongs to the universal ribosomal protein uL2 family. In terms of assembly, part of the 50S ribosomal subunit. Forms a bridge to the 30S subunit in the 70S ribosome.

Functionally, one of the primary rRNA binding proteins. Required for association of the 30S and 50S subunits to form the 70S ribosome, for tRNA binding and peptide bond formation. It has been suggested to have peptidyltransferase activity; this is somewhat controversial. Makes several contacts with the 16S rRNA in the 70S ribosome. The protein is Large ribosomal subunit protein uL2 of Rickettsia massiliae (strain Mtu5).